The sequence spans 423 residues: Glucose-1-phosphate adenylyltransferase (423 aa).

Residues Tyr107, Gly172, 187–188, and Ser205 each bind alpha-D-glucose 1-phosphate; that span reads EK.

This sequence belongs to the bacterial/plant glucose-1-phosphate adenylyltransferase family. As to quaternary structure, homotetramer.

It carries out the reaction alpha-D-glucose 1-phosphate + ATP + H(+) = ADP-alpha-D-glucose + diphosphate. It participates in glycan biosynthesis; glycogen biosynthesis. Involved in the biosynthesis of ADP-glucose, a building block required for the elongation reactions to produce glycogen. Catalyzes the reaction between ATP and alpha-D-glucose 1-phosphate (G1P) to produce pyrophosphate and ADP-Glc. The chain is Glucose-1-phosphate adenylyltransferase from Cereibacter sphaeroides (strain ATCC 17029 / ATH 2.4.9) (Rhodobacter sphaeroides).